We begin with the raw amino-acid sequence, 322 residues long: Olfactory receptor 11L1 (322 aa).

The Extracellular segment spans residues 1–25 (MEPQNTSTVTNFQLLGFQNLLEWQA). Residue N5 is glycosylated (N-linked (GlcNAc...) asparagine). A helical membrane pass occupies residues 26–46 (LLFVIFLLIYCLTIIGNVVII). Over 47-54 (TVVSQGLR) the chain is Cytoplasmic. A helical membrane pass occupies residues 55 to 75 (LHSPMYMFLQHLSFLEVWYTS). The Extracellular portion of the chain corresponds to 76-99 (TTVPLLLANLLSWGQAISFSACMA). An intrachain disulfide couples C97 to C189. Residues 100 to 120 (QLYFFVFLGATECFLLAFMAY) form a helical membrane-spanning segment. The Cytoplasmic portion of the chain corresponds to 121–139 (DRYLAICSPLRYPFLMHRG). The helical transmembrane segment at 140–160 (LCARLVVVSWCTGVSTGFLPS) threads the bilayer. The Extracellular portion of the chain corresponds to 161 to 197 (LMISRLDFCGRNQINHFFCDLPPLMQLSCSRVYITEV). A helical membrane pass occupies residues 198-217 (TIFILSIAVLCICFFLTLGP). The Cytoplasmic portion of the chain corresponds to 218–237 (YVFIVSSILRIPSTSGRRKT). A helical membrane pass occupies residues 238–258 (FSTCGSHLAVVTLYYGTMISM). At 259-271 (YVCPSPHLLPEIN) the chain is on the extracellular side. The chain crosses the membrane as a helical span at residues 272-292 (KIISVFYTVVTPLLNPVIYSL). Topologically, residues 293–322 (RNKDFKEAVRKVMRRKCGILWSTSKRKFLY) are cytoplasmic.

This sequence belongs to the G-protein coupled receptor 1 family.

Its subcellular location is the cell membrane. Functionally, odorant receptor. This chain is Olfactory receptor 11L1 (OR11L1), found in Homo sapiens (Human).